Reading from the N-terminus, the 231-residue chain is Putative N-acetylmannosamine-6-phosphate 2-epimerase (231 aa).

This sequence belongs to the NanE family.

It catalyses the reaction an N-acyl-D-glucosamine 6-phosphate = an N-acyl-D-mannosamine 6-phosphate. Its pathway is amino-sugar metabolism; N-acetylneuraminate degradation; D-fructose 6-phosphate from N-acetylneuraminate: step 3/5. Functionally, converts N-acetylmannosamine-6-phosphate (ManNAc-6-P) to N-acetylglucosamine-6-phosphate (GlcNAc-6-P). The protein is Putative N-acetylmannosamine-6-phosphate 2-epimerase of Listeria innocua serovar 6a (strain ATCC BAA-680 / CLIP 11262).